Consider the following 66-residue polypeptide: Large ribosomal subunit protein bL35 (66 aa).

Composition is skewed to basic residues over residues 1-26 (MPKMKTHKGAAKRFKKTGSGKLKRSH) and 38-48 (QKQKRKLRKSA). A disordered region spans residues 1–48 (MPKMKTHKGAAKRFKKTGSGKLKRSHAFTSHLFANKSQKQKRKLRKSA).

It belongs to the bacterial ribosomal protein bL35 family.

This is Large ribosomal subunit protein bL35 from Halalkalibacterium halodurans (strain ATCC BAA-125 / DSM 18197 / FERM 7344 / JCM 9153 / C-125) (Bacillus halodurans).